A 90-amino-acid polypeptide reads, in one-letter code: Cell division topological specificity factor (90 aa).

It belongs to the MinE family.

In terms of biological role, prevents the cell division inhibition by proteins MinC and MinD at internal division sites while permitting inhibition at polar sites. This ensures cell division at the proper site by restricting the formation of a division septum at the midpoint of the long axis of the cell. In Francisella philomiragia subsp. philomiragia (strain ATCC 25017 / CCUG 19701 / FSC 153 / O#319-036), this protein is Cell division topological specificity factor.